The sequence spans 286 residues: Alpha/beta-gliadin (286 aa).

Positions 1–20 (MKTFLILVLLAIVATTATTA) are cleaved as a signal peptide. The interval 51–120 (LGQQQPFPPQ…QQPISQQQQQ (70 aa)) is disordered. Over residues 56-71 (PFPPQQPYPQPQPFPS) the composition is skewed to pro residues. Residues 72–92 (QLPYLQLQPFPQPQLPYSQPQ) are compositionally biased toward low complexity. A compositionally biased stretch (pro residues) spans 93–104 (PFRPQQPYPQPQ). The segment covering 105-120 (PQYSQPQQPISQQQQQ) has biased composition (low complexity).

The protein belongs to the gliadin/glutenin family. Post-translationally, substrate of transglutaminase.

Gliadin is the major seed storage protein in wheat. This chain is Alpha/beta-gliadin, found in Triticum aestivum (Wheat).